The sequence spans 97 residues: MEVTDVRLRRVNTEGRMRAIASITLDHEFVVHDIRVIDGNNGLFVAMPSKRTPDGEFRDIAHPINSNTRSKIQDAVLTEYHRLGELEEVEFEEAGAS.

Belongs to the SpoVG family.

In terms of biological role, essential for sporulation. Interferes with or is a negative regulator of the pathway leading to asymmetric septation. The chain is Putative septation protein SpoVG from Bacillus cytotoxicus (strain DSM 22905 / CIP 110041 / 391-98 / NVH 391-98).